Consider the following 283-residue polypeptide: Elongation factor Ts (283 aa).

Positions 79-82 (TDFV) are involved in Mg(2+) ion dislocation from EF-Tu.

This sequence belongs to the EF-Ts family.

It is found in the cytoplasm. Associates with the EF-Tu.GDP complex and induces the exchange of GDP to GTP. It remains bound to the aminoacyl-tRNA.EF-Tu.GTP complex up to the GTP hydrolysis stage on the ribosome. In Shewanella oneidensis (strain ATCC 700550 / JCM 31522 / CIP 106686 / LMG 19005 / NCIMB 14063 / MR-1), this protein is Elongation factor Ts.